The chain runs to 282 residues: MKIVTTVQEMQQITNELHASGKSIGFVPTMGYLHEGHATLLRKAREENEIVVLSVFVNPLQFGPNEDLDRYPRDIDRDENVAKENGVDYLFYPSVEEMYPSEQTTTVEVVKRTDVLCGKQRPGHFAGVATVLMKLFNITLPTRAYFGMKDAQQVAVIEGFVTDFNIPVTIVPVDIVREEDGLAKSSRNVYLSQDEREEALHLYRSLCIAKERIEAGERNPEIITNLVKEYIETHTKGTVDYADLYAYPSLTMVEKVEGRIILAIAVKFENVRLIDNITLTVK.

30–37 (MGYLHEGH) serves as a coordination point for ATP. The Proton donor role is filled by His-37. (R)-pantoate is bound at residue Gln-61. Position 61 (Gln-61) interacts with beta-alanine. 147-150 (GMKD) contributes to the ATP binding site. (R)-pantoate is bound at residue Gln-153. ATP-binding positions include Val-176 and 184–187 (KSSR).

Belongs to the pantothenate synthetase family. As to quaternary structure, homodimer.

Its subcellular location is the cytoplasm. The catalysed reaction is (R)-pantoate + beta-alanine + ATP = (R)-pantothenate + AMP + diphosphate + H(+). It functions in the pathway cofactor biosynthesis; (R)-pantothenate biosynthesis; (R)-pantothenate from (R)-pantoate and beta-alanine: step 1/1. Its function is as follows. Catalyzes the condensation of pantoate with beta-alanine in an ATP-dependent reaction via a pantoyl-adenylate intermediate. This is Pantothenate synthetase from Bacillus cereus (strain G9842).